The following is a 71-amino-acid chain: UPF0346 protein SP70585_0986 (71 aa).

The protein belongs to the UPF0346 family.

This chain is UPF0346 protein SP70585_0986, found in Streptococcus pneumoniae (strain 70585).